A 508-amino-acid polypeptide reads, in one-letter code: Methionine--tRNA ligase (508 aa).

Residues 12 to 22 (YYVNDIPHIGH) carry the 'HIGH' region motif. The 'KMSKS' region motif lies at 295-299 (KISKS). Position 298 (Lys-298) interacts with ATP.

It belongs to the class-I aminoacyl-tRNA synthetase family. MetG type 2B subfamily. In terms of assembly, monomer.

It localises to the cytoplasm. It carries out the reaction tRNA(Met) + L-methionine + ATP = L-methionyl-tRNA(Met) + AMP + diphosphate. Is required not only for elongation of protein synthesis but also for the initiation of all mRNA translation through initiator tRNA(fMet) aminoacylation. This Rickettsia conorii (strain ATCC VR-613 / Malish 7) protein is Methionine--tRNA ligase.